The following is a 333-amino-acid chain: D-lactate dehydrogenase (333 aa).

NAD(+)-binding positions include 156 to 157, Asp-176, 207 to 208, Asn-213, 234 to 236, and Asp-260; these read HI, VP, and VSR. Arg-236 is an active-site residue. Residue Glu-265 is part of the active site. His-297 functions as the Proton donor in the catalytic mechanism.

The protein belongs to the D-isomer specific 2-hydroxyacid dehydrogenase family. As to quaternary structure, homodimer.

The enzyme catalyses (R)-lactate + NAD(+) = pyruvate + NADH + H(+). The polypeptide is D-lactate dehydrogenase (ldhA) (Lactobacillus delbrueckii subsp. bulgaricus (strain ATCC 11842 / DSM 20081 / BCRC 10696 / JCM 1002 / NBRC 13953 / NCIMB 11778 / NCTC 12712 / WDCM 00102 / Lb 14)).